Reading from the N-terminus, the 102-residue chain is Small ribosomal subunit protein uS14 (102 aa).

The protein belongs to the universal ribosomal protein uS14 family. Part of the 30S ribosomal subunit. Contacts proteins S3 and S10.

In terms of biological role, binds 16S rRNA, required for the assembly of 30S particles and may also be responsible for determining the conformation of the 16S rRNA at the A site. In Wolbachia pipientis subsp. Culex pipiens (strain wPip), this protein is Small ribosomal subunit protein uS14.